Here is a 262-residue protein sequence, read N- to C-terminus: Encapsulin nanocompartment protein Rv1762c (262 aa).

This sequence belongs to the UPF0145 family.

It is found in the encapsulin nanocompartment. In terms of biological role, cargo protein of a type 1 encapsulin nanocompartment possibly involved in protection against oxidative stress. The protein is Encapsulin nanocompartment protein Rv1762c of Mycobacterium tuberculosis (strain ATCC 25618 / H37Rv).